A 438-amino-acid chain; its full sequence is Probable exopolygalacturonase B (438 aa).

The N-terminal stretch at 1–15 (MYLLPLTLFLTAAFG) is a signal peptide. Asn118, Asn185, and Asn225 each carry an N-linked (GlcNAc...) asparagine glycan. One copy of the PbH1 1 repeat lies at 209–248 (TNDVSFDNVYIHAFSTNASSDPANTDGMDSLDVDGVSFTN). Residue Asp255 is the Proton donor of the active site. Cys257 and Cys274 are disulfide-bonded. 2 N-linked (GlcNAc...) asparagine glycosylation sites follow: Asn263 and Asn275. His278 is a catalytic residue. PbH1 repeat units lie at residues 295–316 (IENV…RLKA) and 327–348 (INNV…VLDQ). Residues Asn302, Asn329, Asn354, and Asn366 are each glycosylated (N-linked (GlcNAc...) asparagine). Cys392 and Cys398 form a disulfide bridge. One copy of the PbH1 4 repeat lies at 398–430 (CTNITLSNVNLTSPKGTAEIVCDDIQGGIGVDC). N-linked (GlcNAc...) asparagine glycosylation is found at Asn400 and Asn407.

This sequence belongs to the glycosyl hydrolase 28 family.

It localises to the secreted. It carries out the reaction [(1-&gt;4)-alpha-D-galacturonosyl](n) + H2O = alpha-D-galacturonate + [(1-&gt;4)-alpha-D-galacturonosyl](n-1). Functionally, specific in hydrolyzing the terminal glycosidic bond of polygalacturonic acid and oligogalacturonates. This is Probable exopolygalacturonase B (pgxB) from Aspergillus niger (strain ATCC MYA-4892 / CBS 513.88 / FGSC A1513).